The following is a 177-amino-acid chain: 3-hydroxyanthranilate 3,4-dioxygenase (177 aa).

Arg47 lines the O2 pocket. Residues His51, Glu57, and His95 each contribute to the Fe cation site. Residue Glu57 participates in substrate binding. 2 residues coordinate substrate: Arg99 and Glu110. Positions 125, 128, 162, and 165 each coordinate Fe cation.

Belongs to the 3-HAO family. Homodimer. Fe(2+) serves as cofactor.

It catalyses the reaction 3-hydroxyanthranilate + O2 = (2Z,4Z)-2-amino-3-carboxymuconate 6-semialdehyde. Its pathway is cofactor biosynthesis; NAD(+) biosynthesis; quinolinate from L-kynurenine: step 3/3. Its function is as follows. Catalyzes the oxidative ring opening of 3-hydroxyanthranilate to 2-amino-3-carboxymuconate semialdehyde, which spontaneously cyclizes to quinolinate. This is 3-hydroxyanthranilate 3,4-dioxygenase from Burkholderia cenocepacia (strain ATCC BAA-245 / DSM 16553 / LMG 16656 / NCTC 13227 / J2315 / CF5610) (Burkholderia cepacia (strain J2315)).